The sequence spans 313 residues: Ribosomal RNA small subunit methyltransferase H (313 aa).

S-adenosyl-L-methionine-binding positions include 31-33 (GGH), Asp51, Phe77, Asp95, and Gln102.

Belongs to the methyltransferase superfamily. RsmH family.

Its subcellular location is the cytoplasm. It carries out the reaction cytidine(1402) in 16S rRNA + S-adenosyl-L-methionine = N(4)-methylcytidine(1402) in 16S rRNA + S-adenosyl-L-homocysteine + H(+). Its function is as follows. Specifically methylates the N4 position of cytidine in position 1402 (C1402) of 16S rRNA. In Xylella fastidiosa (strain M23), this protein is Ribosomal RNA small subunit methyltransferase H.